The sequence spans 995 residues: Pheromone-regulated membrane protein 10 (995 aa).

Disordered stretches follow at residues 1–217 (MSSH…GEKH), 253–299 (GRVL…AVEM), 326–407 (DQSF…YIAP), and 425–508 (NPQD…NPDQ). A compositionally biased stretch (low complexity) spans 74–88 (SNSSTTNNSTESSGS). Residues 110–121 (VKGESGDAHEGS) show a composition bias toward basic and acidic residues. Residues 157-166 (SRGSVGSSSS) show a composition bias toward low complexity. A compositionally biased stretch (basic and acidic residues) spans 170–187 (KGSDDVNEKETNLDHDYD). The span at 259–269 (GSGGGGGGGLI) shows a compositional bias: gly residues. Acidic residues predominate over residues 283–296 (EEKEVGGGGEDDGA). Over residues 326 to 347 (DQSFTYDEPNQSAGSSRNSTAP) the composition is skewed to polar residues. 2 stretches are compositionally biased toward basic and acidic residues: residues 359-371 (DDHK…DQGK) and 385-396 (GNDDPEDQHLLL). Residues 495-506 (EADDEDEDEENP) are compositionally biased toward acidic residues. 10 helical membrane-spanning segments follow: residues 678 to 698 (VFLY…GGWL), 700 to 720 (IPVT…VSSM), 726 to 746 (SVFE…IGSI), 752 to 772 (FCFS…YIIL), 794 to 814 (IIYS…FGWV), 833 to 850 (KYRI…GLIN), 858 to 878 (PVMM…GKHF), 881 to 901 (VPEF…NVYS), 906 to 926 (GMAV…GIAS), and 965 to 985 (VEVS…VYPF).

Belongs to the ThrE exporter (TC 2.A.79) family.

The protein resides in the membrane. In Pichia sorbitophila (strain ATCC MYA-4447 / BCRC 22081 / CBS 7064 / NBRC 10061 / NRRL Y-12695) (Hybrid yeast), this protein is Pheromone-regulated membrane protein 10.